The chain runs to 552 residues: Putative acetolactate synthase large subunit IlvB2 (552 aa).

Glu-48 contributes to the thiamine diphosphate binding site. FAD is bound by residues 262–285 (FGDGRADEYLFDTPCDLLIAVGVS) and 309–328 (DPDPSAVGRFVATSLGITTS). The tract at residues 394–474 (TCISWTFRGI…VTWAVLNDGQ (81 aa)) is thiamine pyrophosphate binding. A Mg(2+)-binding site is contributed by Asp-445.

The protein belongs to the TPP enzyme family. In terms of assembly, heterodimer of large catalytic subunit and small regulatory subunit. The cofactor is Mg(2+). Thiamine diphosphate serves as cofactor.

It catalyses the reaction 2 pyruvate + H(+) = (2S)-2-acetolactate + CO2. It participates in amino-acid biosynthesis; L-isoleucine biosynthesis; L-isoleucine from 2-oxobutanoate: step 1/4. It functions in the pathway amino-acid biosynthesis; L-valine biosynthesis; L-valine from pyruvate: step 1/4. In terms of biological role, catalyzes the conversion of 2 pyruvate molecules into acetolactate in the first common step of the biosynthetic pathway of the branched-amino acids such as leucine, isoleucine, and valine. This is Putative acetolactate synthase large subunit IlvB2 (ilvB2) from Mycobacterium tuberculosis (strain ATCC 25618 / H37Rv).